The sequence spans 287 residues: MQVQKSFKDKKTSGTLYLVPTPIGNLQDMTFRAVATLKEVDFICAEDTRNTGLLLKHFDIATKQISFHEHNAYEKIPDLIDLLISGRSLAQVSDAGMPSISDPGHDLVKAAIDSDITVVALPGASAGITALIASGLAPQPHVFYGFLPRKAGQQKAFFEDKHHYPETQMFYESPYRIKDTLTNMLACYGDRQVVLVRELTKLFEEYQRGSISEILSYLEETSLKGECLLIVAGAQVDSEVELTADVDLVSLVQKEIQAGAKPNQAIKTIAKAYQVNRQELYQQFHDL.

It belongs to the methyltransferase superfamily. RsmI family.

The protein resides in the cytoplasm. It catalyses the reaction cytidine(1402) in 16S rRNA + S-adenosyl-L-methionine = 2'-O-methylcytidine(1402) in 16S rRNA + S-adenosyl-L-homocysteine + H(+). Its function is as follows. Catalyzes the 2'-O-methylation of the ribose of cytidine 1402 (C1402) in 16S rRNA. The chain is Ribosomal RNA small subunit methyltransferase I from Streptococcus pyogenes serotype M3 (strain ATCC BAA-595 / MGAS315).